Reading from the N-terminus, the 427-residue chain is Proline--tRNA ligase (427 aa).

Belongs to the class-II aminoacyl-tRNA synthetase family. ProS type 2 subfamily. Homodimer.

The protein localises to the cytoplasm. It catalyses the reaction tRNA(Pro) + L-proline + ATP = L-prolyl-tRNA(Pro) + AMP + diphosphate. Catalyzes the attachment of proline to tRNA(Pro) in a two-step reaction: proline is first activated by ATP to form Pro-AMP and then transferred to the acceptor end of tRNA(Pro). This chain is Proline--tRNA ligase, found in Rickettsia akari (strain Hartford).